Consider the following 507-residue polypeptide: Monoogygenase CPUR_05431 (507 aa).

It belongs to the PheA/TfdB FAD monooxygenase family. FAD is required as a cofactor.

Its pathway is pigment biosynthesis. In terms of biological role, monoogygenase; part of the ergochrome gene cluster responsible for the typical purple-black color of the ergot sclerotia. The ergochrome gene cluster produces several ergot pigments including the yellow ergochrome secalonic acid and its derivatives, as well as the red anthraquinones endocrocin and clavorubin. The pathway begins with the synthesis of atrochrysone thioester by the polyketide synthase (PKS) CPUR_05437. The atrochrysone carboxyl ACP thioesterase CPUR_05436 then breaks the thioester bond and releases the atrochrysone carboxylic acid from CPUR_05437. The atrochrysone carboxylic acid is then converted to atrochrysone which is further transformed into emodin anthrone. The next step is performed by the anthrone oxygenase CPUR_05434 that catalyzes the oxidation of emodinanthrone to emodin. Emodin is further modified to yield monodictyphenone via several steps involving CPUR_05427, CPUR_05428, CPUR_05429 and CPUR_05430. The short chain dehydrogenase/reductase CPUR_05418 then catalyzes the C-5 ketoreduction to give the xanthone skeleton of the monomeric units. Ergochromes formation requires further dimerization steps of different xanthone units, probably catalyzed by the cytochrome P450 monooxygenase CPUR_05419. CPUR_05425, CPUR_05426 and CPUR_05431 are unique to Claviceps, thus it is likely that they are involved in further modification of xanthone units or in their dimerization. The yellow ergochromes and the red anthraquinone pigments endocrocin and clavorubin are products from the same PKS derived precursors and the latter are likely shunt products in the pathway of xanthone biosynthesis. It is proposed that atrochrysone carboxylic acid released from the PKS CPUR_05437 can also be converted to endocrocin anthrone which is further oxidized into endocrocin by CPUR_05435. Endocrocin could be then modified to clavorubin, possibly by CPUR_05423 and CPUR_05431. Clavorubin is the principal anthraquinone metabolite produced by the cluster with a much higher yield compared to endocrocin. This chain is Monoogygenase CPUR_05431, found in Claviceps purpurea (strain 20.1) (Ergot fungus).